The following is a 1635-amino-acid chain: U3 small nucleolar RNA-associated protein 10 (1635 aa).

The segment at 781 to 803 (TTSMDAPSDESTKRRRRSSSSTV) is disordered. Helical transmembrane passes span 1141–1161 (PELL…TVAG) and 1288–1308 (IALS…SFMV).

It belongs to the HEATR1/UTP10 family. In terms of assembly, component of the ribosomal small subunit (SSU) processome.

It localises to the nucleus. It is found in the nucleolus. Its subcellular location is the membrane. In terms of biological role, involved in nucleolar processing of pre-18S ribosomal RNA. Involved in ribosome biosynthesis. The polypeptide is U3 small nucleolar RNA-associated protein 10 (Yarrowia lipolytica (strain CLIB 122 / E 150) (Yeast)).